We begin with the raw amino-acid sequence, 955 residues long: Eukaryotic translation initiation factor 3 subunit A (955 aa).

A coiled-coil region spans residues Leu-96–Thr-127. A PCI domain is found at Tyr-325–Ala-498. Coiled coils occupy residues Ala-533 to Lys-636 and Lys-752 to Gly-860. Residues Arg-789–Arg-858 show a composition bias toward basic and acidic residues. The tract at residues Arg-789 to Asn-955 is disordered.

It belongs to the eIF-3 subunit A family. As to quaternary structure, component of the eukaryotic translation initiation factor 3 (eIF-3) complex.

Its subcellular location is the cytoplasm. In terms of biological role, RNA-binding component of the eukaryotic translation initiation factor 3 (eIF-3) complex, which is involved in protein synthesis of a specialized repertoire of mRNAs and, together with other initiation factors, stimulates binding of mRNA and methionyl-tRNAi to the 40S ribosome. The eIF-3 complex specifically targets and initiates translation of a subset of mRNAs involved in cell proliferation. This chain is Eukaryotic translation initiation factor 3 subunit A, found in Yarrowia lipolytica (strain CLIB 122 / E 150) (Yeast).